The primary structure comprises 171 residues: Co-chaperone protein HscB (171 aa).

The J domain occupies 2–74 (DYFTLFGLPA…LTRAEYLLSL (73 aa)).

The protein belongs to the HscB family. Interacts with HscA and stimulates its ATPase activity. Interacts with IscU.

Functionally, co-chaperone involved in the maturation of iron-sulfur cluster-containing proteins. Seems to help targeting proteins to be folded toward HscA. The protein is Co-chaperone protein HscB of Salmonella paratyphi A (strain AKU_12601).